We begin with the raw amino-acid sequence, 211 residues long: Large ribosomal subunit protein uL3 (211 aa).

The segment at 135 to 155 is disordered; the sequence is THGNSLSHRAPGSIGQNQSPG. Residue glutamine 152 is modified to N5-methylglutamine.

Belongs to the universal ribosomal protein uL3 family. In terms of assembly, part of the 50S ribosomal subunit. Forms a cluster with proteins L14 and L19. In terms of processing, methylated by PrmB.

In terms of biological role, one of the primary rRNA binding proteins, it binds directly near the 3'-end of the 23S rRNA, where it nucleates assembly of the 50S subunit. This Pseudoalteromonas translucida (strain TAC 125) protein is Large ribosomal subunit protein uL3.